Consider the following 162-residue polypeptide: MKPIRFFKPENLQLAKAILARYPLRFQSAALVPLLDLAQRQHGTWIPPTAMYEIASLAGVSIDYVHSLILAYPNDFFWRPKKPRVRICNSWMCQQAAEEQGNSNWDSQCRSVATKYGFDVENTGCLGNCFQGPAMWINDKIYGVNTKEKLVDIMEALTQKKN.

Cys-88, Cys-93, Cys-125, and Cys-129 together coordinate [2Fe-2S] cluster.

It belongs to the complex I 24 kDa subunit family. [2Fe-2S] cluster serves as cofactor.

It is found in the mitochondrion. The chain is NADH-ubiquinone oxidoreductase 24 kDa subunit homolog C11E3.12, mitochondrial from Schizosaccharomyces pombe (strain 972 / ATCC 24843) (Fission yeast).